Consider the following 244-residue polypeptide: DNA repair protein RecO (244 aa).

It belongs to the RecO family.

Functionally, involved in DNA repair and RecF pathway recombination. This chain is DNA repair protein RecO, found in Nocardioides sp. (strain ATCC BAA-499 / JS614).